Reading from the N-terminus, the 532-residue chain is Undecaprenyl-phosphate glucose phosphotransferase (532 aa).

A run of 5 helical transmembrane segments spans residues 81–101 (QVVVLSDAFCVCLAVVACIAW), 110–130 (ELSGALLLANIMAAGAFFLFP), 155–175 (VAFGEVVFCTVLVMLSWPFGV), 183–203 (WLTFVVAILFVERCVGTYILH), and 344–364 (TASVLLLLALAPLLTLVALAI).

The protein belongs to the bacterial sugar transferase family.

It is found in the membrane. The enzyme catalyses di-trans,octa-cis-undecaprenyl phosphate + UDP-alpha-D-glucose = alpha-D-glucosyl di-trans,octa-cis-undecaprenyl diphosphate + UMP. Involved in the biosynthesis of the exopolysaccharide acetan, a water-soluble polysaccharide involved in production of bacterial cellulose (BC). The polypeptide is Undecaprenyl-phosphate glucose phosphotransferase (aceA) (Komagataeibacter xylinus (Gluconacetobacter xylinus)).